We begin with the raw amino-acid sequence, 236 residues long: Leucyl/phenylalanyl-tRNA--protein transferase (236 aa).

Belongs to the L/F-transferase family.

The protein resides in the cytoplasm. The catalysed reaction is N-terminal L-lysyl-[protein] + L-leucyl-tRNA(Leu) = N-terminal L-leucyl-L-lysyl-[protein] + tRNA(Leu) + H(+). It catalyses the reaction N-terminal L-arginyl-[protein] + L-leucyl-tRNA(Leu) = N-terminal L-leucyl-L-arginyl-[protein] + tRNA(Leu) + H(+). It carries out the reaction L-phenylalanyl-tRNA(Phe) + an N-terminal L-alpha-aminoacyl-[protein] = an N-terminal L-phenylalanyl-L-alpha-aminoacyl-[protein] + tRNA(Phe). Functions in the N-end rule pathway of protein degradation where it conjugates Leu, Phe and, less efficiently, Met from aminoacyl-tRNAs to the N-termini of proteins containing an N-terminal arginine or lysine. The chain is Leucyl/phenylalanyl-tRNA--protein transferase from Shewanella halifaxensis (strain HAW-EB4).